The chain runs to 95 residues: Aspartyl/glutamyl-tRNA(Asn/Gln) amidotransferase subunit C (95 aa).

Belongs to the GatC family. As to quaternary structure, heterotrimer of A, B and C subunits.

It catalyses the reaction L-glutamyl-tRNA(Gln) + L-glutamine + ATP + H2O = L-glutaminyl-tRNA(Gln) + L-glutamate + ADP + phosphate + H(+). It carries out the reaction L-aspartyl-tRNA(Asn) + L-glutamine + ATP + H2O = L-asparaginyl-tRNA(Asn) + L-glutamate + ADP + phosphate + 2 H(+). Allows the formation of correctly charged Asn-tRNA(Asn) or Gln-tRNA(Gln) through the transamidation of misacylated Asp-tRNA(Asn) or Glu-tRNA(Gln) in organisms which lack either or both of asparaginyl-tRNA or glutaminyl-tRNA synthetases. The reaction takes place in the presence of glutamine and ATP through an activated phospho-Asp-tRNA(Asn) or phospho-Glu-tRNA(Gln). In Marinobacter nauticus (strain ATCC 700491 / DSM 11845 / VT8) (Marinobacter aquaeolei), this protein is Aspartyl/glutamyl-tRNA(Asn/Gln) amidotransferase subunit C.